The sequence spans 60 residues: Mastoparan-VT6 (60 aa).

Positions 1–27 (MKNTILILFTAFIALLGFFGMSAEALA) are cleaved as a signal peptide. 4 AXPX repeats span residues 27-30 (ADPK), 31-34 (ADPL), 35-38 (AGPN), and 41-44 (ADPE). The propeptide occupies 28–45 (DPKADPLAGPNPDADPEA). Leucine 59 carries the post-translational modification Leucine amide.

This sequence belongs to the MCD family. Mastoparan subfamily. Expressed by the venom gland.

Its subcellular location is the secreted. The synthetic peptide shows antimicrobial activities against Gram-negative bacteria (but not against all strains tested), Gram-positive bacteria (all strains tested) and the fungi C.albicans and C.parapsilosis. Exhibits little hemolytic activity against washed human erythrocytes. This is Mastoparan-VT6 from Vespa tropica (Greater banded hornet).